The chain runs to 224 residues: Uracil phosphoribosyltransferase (224 aa).

38–42 (KGLVK) is a GTP binding site. Residues R87, R112, and 140 to 148 (DPMIATGST) contribute to the 5-phospho-alpha-D-ribose 1-diphosphate site. Residues I204 and 209–211 (GDA) each bind uracil. D210 provides a ligand contact to 5-phospho-alpha-D-ribose 1-diphosphate.

This sequence belongs to the UPRTase family. Mg(2+) serves as cofactor.

It catalyses the reaction UMP + diphosphate = 5-phospho-alpha-D-ribose 1-diphosphate + uracil. It participates in pyrimidine metabolism; UMP biosynthesis via salvage pathway; UMP from uracil: step 1/1. Allosterically activated by GTP. Functionally, catalyzes the conversion of uracil and 5-phospho-alpha-D-ribose 1-diphosphate (PRPP) to UMP and diphosphate. This chain is Uracil phosphoribosyltransferase, found in Thermococcus gammatolerans (strain DSM 15229 / JCM 11827 / EJ3).